The following is a 200-amino-acid chain: MSVIPYVIEQTGRGERMYDIYSRLLKDRIIFVGTPIESQMANTIVAQLLLLDSQNPDQEIQMYINCPGGEVYAGLAIYDTMRYIKAPVSTICVGIAMSMGSVLLMAGDKGKRLALPNSRIMIHQGSAGFRGNTPDLEVQAKEVLRLRDTLIDIYHRHTNLPHEKLLRDMERDYFMSPYEAQQYGLIDSVIEHTRQPEAAL.

Catalysis depends on S98, which acts as the Nucleophile. The active site involves H123.

It belongs to the peptidase S14 family. In terms of assembly, fourteen ClpP subunits assemble into 2 heptameric rings which stack back to back to give a disk-like structure with a central cavity, resembling the structure of eukaryotic proteasomes.

Its subcellular location is the cytoplasm. The catalysed reaction is Hydrolysis of proteins to small peptides in the presence of ATP and magnesium. alpha-casein is the usual test substrate. In the absence of ATP, only oligopeptides shorter than five residues are hydrolyzed (such as succinyl-Leu-Tyr-|-NHMec, and Leu-Tyr-Leu-|-Tyr-Trp, in which cleavage of the -Tyr-|-Leu- and -Tyr-|-Trp bonds also occurs).. In terms of biological role, cleaves peptides in various proteins in a process that requires ATP hydrolysis. Has a chymotrypsin-like activity. Plays a major role in the degradation of misfolded proteins. The chain is ATP-dependent Clp protease proteolytic subunit from Deinococcus geothermalis (strain DSM 11300 / CIP 105573 / AG-3a).